A 558-amino-acid chain; its full sequence is Dihydroxy-acid dehydratase (558 aa).

Position 81 (D81) interacts with Mg(2+). [2Fe-2S] cluster is bound at residue C122. Mg(2+)-binding residues include D123 and K124. K124 is modified (N6-carboxylysine). C195 is a [2Fe-2S] cluster binding site. E447 provides a ligand contact to Mg(2+). The active-site Proton acceptor is S473.

Belongs to the IlvD/Edd family. As to quaternary structure, homodimer. It depends on [2Fe-2S] cluster as a cofactor. Requires Mg(2+) as cofactor.

The enzyme catalyses (2R)-2,3-dihydroxy-3-methylbutanoate = 3-methyl-2-oxobutanoate + H2O. It carries out the reaction (2R,3R)-2,3-dihydroxy-3-methylpentanoate = (S)-3-methyl-2-oxopentanoate + H2O. It functions in the pathway amino-acid biosynthesis; L-isoleucine biosynthesis; L-isoleucine from 2-oxobutanoate: step 3/4. The protein operates within amino-acid biosynthesis; L-valine biosynthesis; L-valine from pyruvate: step 3/4. Functionally, functions in the biosynthesis of branched-chain amino acids. Catalyzes the dehydration of (2R,3R)-2,3-dihydroxy-3-methylpentanoate (2,3-dihydroxy-3-methylvalerate) into 2-oxo-3-methylpentanoate (2-oxo-3-methylvalerate) and of (2R)-2,3-dihydroxy-3-methylbutanoate (2,3-dihydroxyisovalerate) into 2-oxo-3-methylbutanoate (2-oxoisovalerate), the penultimate precursor to L-isoleucine and L-valine, respectively. In Bacillus subtilis (strain 168), this protein is Dihydroxy-acid dehydratase.